The sequence spans 358 residues: tRNA-specific 2-thiouridylase MnmA (358 aa).

ATP is bound by residues 6–13 and M32; that span reads ALSGGVDS. C103 (nucleophile) is an active-site residue. C103 and C201 are oxidised to a cystine. Position 127 (G127) interacts with ATP. An interaction with tRNA region spans residues 151–153; it reads KDQ. Residue C201 is the Cysteine persulfide intermediate of the active site.

It belongs to the MnmA/TRMU family.

The protein localises to the cytoplasm. The enzyme catalyses S-sulfanyl-L-cysteinyl-[protein] + uridine(34) in tRNA + AH2 + ATP = 2-thiouridine(34) in tRNA + L-cysteinyl-[protein] + A + AMP + diphosphate + H(+). Its function is as follows. Catalyzes the 2-thiolation of uridine at the wobble position (U34) of tRNA, leading to the formation of s(2)U34. This is tRNA-specific 2-thiouridylase MnmA from Thermotoga neapolitana (strain ATCC 49049 / DSM 4359 / NBRC 107923 / NS-E).